The sequence spans 228 residues: Triosephosphate isomerase (228 aa).

Residue asparagine 9–lysine 11 participates in substrate binding. Histidine 93 serves as the catalytic Electrophile. Glutamate 141 acts as the Proton acceptor in catalysis. Residues isoleucine 146, glycine 180, and alanine 201–serine 202 each bind substrate.

The protein belongs to the triosephosphate isomerase family. In terms of assembly, homotetramer; dimer of dimers.

Its subcellular location is the cytoplasm. It carries out the reaction D-glyceraldehyde 3-phosphate = dihydroxyacetone phosphate. It participates in carbohydrate biosynthesis; gluconeogenesis. Its pathway is carbohydrate degradation; glycolysis; D-glyceraldehyde 3-phosphate from glycerone phosphate: step 1/1. Functionally, involved in the gluconeogenesis. Catalyzes stereospecifically the conversion of dihydroxyacetone phosphate (DHAP) to D-glyceraldehyde-3-phosphate (G3P). The protein is Triosephosphate isomerase of Metallosphaera sedula (strain ATCC 51363 / DSM 5348 / JCM 9185 / NBRC 15509 / TH2).